The primary structure comprises 740 residues: Catalase-peroxidase (740 aa).

Positions 107–229 form a cross-link, tryptophyl-tyrosyl-methioninium (Trp-Tyr) (with M-255); the sequence is WHAAGTYRIH…LAAVQMGLIY (123 aa). His-108 acts as the Proton acceptor in catalysis. Residues 229 to 255 constitute a cross-link (tryptophyl-tyrosyl-methioninium (Tyr-Met) (with W-107)); that stretch reads YVNPEGPNGNPDPMAAAVDIRETFRRM. His-270 contributes to the heme b binding site.

Belongs to the peroxidase family. Peroxidase/catalase subfamily. In terms of assembly, homodimer. Requires heme b as cofactor. Post-translationally, formation of the three residue Trp-Tyr-Met cross-link is important for the catalase, but not the peroxidase activity of the enzyme.

It carries out the reaction H2O2 + AH2 = A + 2 H2O. It catalyses the reaction 2 H2O2 = O2 + 2 H2O. Bifunctional enzyme with both catalase and broad-spectrum peroxidase activity. May play a role in the intracellular survival of mycobacteria. The polypeptide is Catalase-peroxidase (Mycobacterium bovis (strain ATCC BAA-935 / AF2122/97)).